A 557-amino-acid chain; its full sequence is Hydroxylamine reductase (557 aa).

Residues Cys4, Cys7, Cys19, and Cys26 each contribute to the [4Fe-4S] cluster site. Hybrid [4Fe-2O-2S] cluster-binding residues include His253, Glu277, Cys321, Cys408, Cys436, Cys461, Glu495, and Lys497. Cys408 bears the Cysteine persulfide mark.

Belongs to the HCP family. The cofactor is [4Fe-4S] cluster. Requires hybrid [4Fe-2O-2S] cluster as cofactor.

The protein resides in the cytoplasm. The catalysed reaction is A + NH4(+) + H2O = hydroxylamine + AH2 + H(+). In terms of biological role, catalyzes the reduction of hydroxylamine to form NH(3) and H(2)O. The polypeptide is Hydroxylamine reductase (Acidithiobacillus ferrooxidans (strain ATCC 53993 / BNL-5-31) (Leptospirillum ferrooxidans (ATCC 53993))).